Consider the following 84-residue polypeptide: MKYFVIALALAVALVCIAESTAYEVNEELENELDDLDDAAWLAVAEELQGLEDFEESRGLFGKLIKKFGRKAISYAVKKARGKN.

An N-terminal signal peptide occupies residues 1-22; it reads MKYFVIALALAVALVCIAESTA. A propeptide spanning residues 23–58 is cleaved from the precursor; it reads YEVNEELENELDDLDDAAWLAVAEELQGLEDFEESR. Positions 55–58 match the Processing quadruplet motif motif; that stretch reads EESR.

Cleavage of the propeptide depends on the processing quadruplet motif (XXXR, with at least one of X being E). As to expression, expressed by the venom gland.

The protein resides in the secreted. In terms of biological role, has antimicrobial activity against both Gram-positive and Gram-negative bacteria, and yeasts. Also has a strong hemolytic activity against rabbit erythrocytes. Causes paralysis, but is not lethal when injected into insect (M.domestica) larvae. The polypeptide is M-zodatoxin-Lt2b (Lachesana tarabaevi (Spider)).